We begin with the raw amino-acid sequence, 85 residues long: MATKKGGGSTKNGRDSVSKRLGVKVYGGQQAIAGNIIVRQRGTEYKPGKNVGIGRDHTLYALVDGIVTFEHVTKERQQISVYPKV.

This sequence belongs to the bacterial ribosomal protein bL27 family.

This chain is Large ribosomal subunit protein bL27, found in Leptospira biflexa serovar Patoc (strain Patoc 1 / Ames).